The chain runs to 548 residues: Folylpolyglutamate synthase (548 aa).

Position 130–133 (130–133 (GKGS)) interacts with ATP. Positions 157, 234, and 262 each coordinate Mg(2+). The ATP site is built by Arg382 and Asp396.

This sequence belongs to the folylpolyglutamate synthase family. A monovalent cation is required as a cofactor.

The protein resides in the mitochondrion inner membrane. Its subcellular location is the mitochondrion matrix. The protein localises to the cytoplasm. It carries out the reaction (6S)-5,6,7,8-tetrahydrofolyl-(gamma-L-Glu)(n) + L-glutamate + ATP = (6S)-5,6,7,8-tetrahydrofolyl-(gamma-L-Glu)(n+1) + ADP + phosphate + H(+). It functions in the pathway cofactor biosynthesis; tetrahydrofolylpolyglutamate biosynthesis. Functionally, catalyzes conversion of folates to polyglutamate derivatives allowing concentration of folate compounds in the cell and the intracellular retention of these cofactors, which are important substrates for most of the folate-dependent enzymes that are involved in one-carbon transfer reactions involved in purine, pyrimidine and amino acid synthesis. Required for methionine synthesis and maintenance of intact mitochondrial DNA. Involved in telomere maintenance. In Saccharomyces cerevisiae (strain AWRI796) (Baker's yeast), this protein is Folylpolyglutamate synthase.